Reading from the N-terminus, the 103-residue chain is UPF0145 protein PTH_2690 (103 aa).

It belongs to the UPF0145 family.

In Pelotomaculum thermopropionicum (strain DSM 13744 / JCM 10971 / SI), this protein is UPF0145 protein PTH_2690.